The following is a 360-amino-acid chain: SPRY domain-containing SOCS box protein 3 (360 aa).

Residues 20 to 55 (RDQDARSPTLPAEEEAWGYDSDGQHSNSDSDTDLLH) are disordered. One can recognise a B30.2/SPRY domain in the interval 85-274 (LHTFHQIKSC…MKVIRSCCCR (190 aa)). Residues 264–315 (SMKVIRSCCCRTSLQYLCCARLRQLLPDSVDSLEVLPLPPGLKQVLGNKLGW) enclose the SOCS box domain. A disordered region spans residues 323-350 (RSNQHKGDTSATTSCGSDSDSSCTPGQD). Positions 331–346 (TSATTSCGSDSDSSCT) are enriched in low complexity.

This sequence belongs to the SPSB family. As to quaternary structure, substrate-recognition component of the ECS(SPSB3) complex, composed of spsb3, cul5, elob, elob and rnf7/rbx2.

It is found in the nucleus. The protein operates within protein modification; protein ubiquitination. In terms of biological role, substrate-recognition component of a cullin-5-RING E3 ubiquitin-protein ligase complex (ECS complex, also named CRL5 complex), which mediates the ubiquitination and subsequent proteasomal degradation of target proteins. This chain is SPRY domain-containing SOCS box protein 3 (spsb3), found in Xenopus tropicalis (Western clawed frog).